The sequence spans 203 residues: Urease accessory protein UreG (203 aa).

Residue 14-21 participates in GTP binding; it reads GPVGAGKT.

This sequence belongs to the SIMIBI class G3E GTPase family. UreG subfamily. Homodimer. UreD, UreF and UreG form a complex that acts as a GTP-hydrolysis-dependent molecular chaperone, activating the urease apoprotein by helping to assemble the nickel containing metallocenter of UreC. The UreE protein probably delivers the nickel.

Its subcellular location is the cytoplasm. Functionally, facilitates the functional incorporation of the urease nickel metallocenter. This process requires GTP hydrolysis, probably effectuated by UreG. The chain is Urease accessory protein UreG from Jannaschia sp. (strain CCS1).